Consider the following 249-residue polypeptide: Green-light absorbing proteorhodopsin (249 aa).

The N-terminal stretch at 1–17 (MKLLLILGSVIALPTFA) is a signal peptide. 7 helical membrane-spanning segments follow: residues 30–49 (GVSF…FFFV), 62–84 (LTVS…GVWI), 99–121 (LLTV…NVAG), 128–147 (LVGS…GIMA), 151–168 (AFII…ELWA), 189–211 (MMYI…YLMG), and 221–243 (LIYN…NVAV). K231 bears the N6-(retinylidene)lysine mark.

It belongs to the archaeal/bacterial/fungal opsin family. Contains one covalently linked retinal chromophore.

The protein resides in the cell membrane. Its function is as follows. Light-driven proton pump that generates photothrophic energy. This chain is Green-light absorbing proteorhodopsin, found in Gamma-proteobacterium EBAC31A08.